The following is a 277-amino-acid chain: C2H2-type zinc-finger transcription factor (277 aa).

2 disordered regions span residues 23–66 and 78–146; these read PTMN…AHPP and MNEP…TDSI. Polar residues predominate over residues 27-37; that stretch reads EIETTDNTYPR. Residues 185-208 form a C2H2-type; degenerate zinc finger; that stretch reads HPCPDCGRVFTRSTARNFHRQSGT.

The protein belongs to the GLI C2H2-type zinc-finger protein family.

The protein localises to the nucleus. In terms of biological role, C2H2-type zinc-finger transcription factor that controls the expression of the nonribosomal peptide synthases inpA and inpB, as well as of the other inp cluster-associated genes. Also mediates the expression of the asperfuranone biosynthesis gene cluster by binding to the afoA promoter. Probably recognizes the 5'-CT/C/AAAAGGAT/AT/GG/CA-3' motif in the promoters of teget genes. The polypeptide is C2H2-type zinc-finger transcription factor (Emericella nidulans (strain FGSC A4 / ATCC 38163 / CBS 112.46 / NRRL 194 / M139) (Aspergillus nidulans)).